A 147-amino-acid chain; its full sequence is uncharacterized protein (147 aa).

An HTH marR-type domain is found at 11 to 147 (NTSPGFLLWQ…SGLQELLKHE (137 aa)). The H-T-H motif DNA-binding region spans 61–84 (QKKLASFSQTNIMMVSEVVRTLEK).

This is an uncharacterized protein from Bacillus subtilis (strain 168).